The chain runs to 428 residues: 4-hydroxy-3-methylbut-2-en-1-yl diphosphate synthase (flavodoxin) (428 aa).

[4Fe-4S] cluster-binding residues include C300, C303, C346, and E353.

It belongs to the IspG family. Requires [4Fe-4S] cluster as cofactor.

The catalysed reaction is (2E)-4-hydroxy-3-methylbut-2-enyl diphosphate + oxidized [flavodoxin] + H2O + 2 H(+) = 2-C-methyl-D-erythritol 2,4-cyclic diphosphate + reduced [flavodoxin]. It functions in the pathway isoprenoid biosynthesis; isopentenyl diphosphate biosynthesis via DXP pathway; isopentenyl diphosphate from 1-deoxy-D-xylulose 5-phosphate: step 5/6. Converts 2C-methyl-D-erythritol 2,4-cyclodiphosphate (ME-2,4cPP) into 1-hydroxy-2-methyl-2-(E)-butenyl 4-diphosphate. This Methylobacillus flagellatus (strain ATCC 51484 / DSM 6875 / VKM B-1610 / KT) protein is 4-hydroxy-3-methylbut-2-en-1-yl diphosphate synthase (flavodoxin).